The sequence spans 121 residues: MSLTNEQIIEAIGQKTVLEVVELIKAMEETFGVTAAVAAAGPAAAAAVVEEQTEFNVVLVEAGEKKVNVIKAVRELTGLGLKEAKEKVDGAPQVVAEGVSKEAAEDAKKKLEEAGAKVELK.

It belongs to the bacterial ribosomal protein bL12 family. Homodimer. Part of the ribosomal stalk of the 50S ribosomal subunit. Forms a multimeric L10(L12)X complex, where L10 forms an elongated spine to which 2 to 4 L12 dimers bind in a sequential fashion. Binds GTP-bound translation factors.

In terms of biological role, forms part of the ribosomal stalk which helps the ribosome interact with GTP-bound translation factors. Is thus essential for accurate translation. The protein is Large ribosomal subunit protein bL12 of Pseudomonas fluorescens (strain Pf0-1).